The following is a 348-amino-acid chain: Fe(3+) ions import ATP-binding protein FbpC (348 aa).

The ABC transporter domain occupies 7-237; sequence VELRNVTKRF…PASRFMASFM (231 aa). 39–46 lines the ATP pocket; sequence GPSGCGKT.

The protein belongs to the ABC transporter superfamily. Fe(3+) ion importer (TC 3.A.1.10) family. As to quaternary structure, the complex is composed of two ATP-binding proteins (FbpC), two transmembrane proteins (FbpB) and a solute-binding protein (FbpA).

The protein resides in the cell inner membrane. It catalyses the reaction Fe(3+)(out) + ATP + H2O = Fe(3+)(in) + ADP + phosphate + H(+). Part of the ABC transporter complex FbpABC involved in Fe(3+) ions import. Responsible for energy coupling to the transport system. In Escherichia coli O157:H7, this protein is Fe(3+) ions import ATP-binding protein FbpC.